Here is a 317-residue protein sequence, read N- to C-terminus: Beta-ketoacyl-[acyl-carrier-protein] synthase III (317 aa).

Residues C112 and H244 contribute to the active site. The interval 245–249 (QANLR) is ACP-binding. The active site involves N274.

This sequence belongs to the thiolase-like superfamily. FabH family. Homodimer.

The protein resides in the cytoplasm. It carries out the reaction malonyl-[ACP] + acetyl-CoA + H(+) = 3-oxobutanoyl-[ACP] + CO2 + CoA. It functions in the pathway lipid metabolism; fatty acid biosynthesis. In terms of biological role, catalyzes the condensation reaction of fatty acid synthesis by the addition to an acyl acceptor of two carbons from malonyl-ACP. Catalyzes the first condensation reaction which initiates fatty acid synthesis and may therefore play a role in governing the total rate of fatty acid production. Possesses both acetoacetyl-ACP synthase and acetyl transacylase activities. Its substrate specificity determines the biosynthesis of branched-chain and/or straight-chain of fatty acids. In Salmonella typhi, this protein is Beta-ketoacyl-[acyl-carrier-protein] synthase III.